The following is an 825-amino-acid chain: Breast cancer anti-estrogen resistance protein 3 homolog (825 aa).

Alanine 2 is modified (N-acetylalanine). Phosphoserine is present on residues serine 32, serine 78, serine 83, serine 182, and serine 290. The segment at 40 to 84 (EAYPDVSIHGTLPRKKKGPPPIRSCDSASHMGTLPHSKSPRQSSP) is disordered. The 100-residue stretch at 154–253 (WYHGRIPRQV…QSGAIIFQPI (100 aa)) folds into the SH2 domain. A disordered region spans residues 300 to 320 (DHSLPRGNLLRNKDKSGSQPA). Lysine 334 is subject to N6-methyllysine. Phosphoserine is present on residues serine 358, serine 363, and serine 375. Arginine 442 is modified (omega-N-methylarginine). Phosphoserine is present on serine 471. The Ras-GEF domain occupies 548–818 (DARVIAQHML…TALSRKLEPP (271 aa)). Residues 744–748 (LATAR) are mediates the interaction with BCAR1/p130CAS.

Part of a complex comprised of PTPRA, BCAR1, BCAR3 and SRC; the formation of the complex is dependent on integrin mediated-tyrosine phosphorylation of PTPRA. Within the complex, interacts (via SH2 domain) with PTPRA (when phosphorylated on 'Tyr-792'). Interacts (via Ras-GEF domain) with BCAR1. Interacts (via Ras-GEF domain) with NEDD9. Interacts with PTK2/FAK1. Interacts with PTPN1. Interacts (via SH2 domain) with EGFR (when tyrosine-phosphorylated). In terms of processing, phosphorylated on tyrosine residues.

The protein localises to the cytoplasm. It localises to the cell junction. Its subcellular location is the focal adhesion. In terms of biological role, acts as an adapter protein downstream of several growth factor receptors to promote cell proliferation, migration, and redistribution of actin fibers. Specifically involved in INS/insulin signaling pathway by mediating MAPK1/ERK2-MAPK3/ERK1 activation and DNA synthesis. Promotes insulin-mediated membrane ruffling. In response to vasoconstrictor peptide EDN1, involved in the activation of RAP1 downstream of PTK2B via interaction with phosphorylated BCAR1. Inhibits cell migration and invasion via regulation of TGFB-mediated matrix digestion, actin filament rearrangement, and inhibition of invadopodia activity. May inhibit TGFB/SMAD signaling, via facilitating BCAR1 and SMAD2 and/or SMAD3 interaction. Regulates EGF-induced DNA synthesis. Required for the maintenance of ocular lens morphology and structural integrity, potentially via regulation of focal adhesion complex signaling. Acts upstream of PTPRA to regulate the localization of BCAR1 and PTPRA to focal adhesions, via regulation of SRC-mediated phosphorylation of PTPRA. Positively regulates integrin-induced tyrosine phosphorylation of BCAR1. Acts as a guanine nucleotide exchange factor (GEF) for small GTPases RALA, RAP1A and RRAS. However, in a contrasting study, lacks GEF activity towards RAP1. This Rattus norvegicus (Rat) protein is Breast cancer anti-estrogen resistance protein 3 homolog.